Reading from the N-terminus, the 63-residue chain is Protease 2 small chain (63 aa).

Residues 11–63 (QWGLSGTYGIRANTAWDNGYQGQGKIIAVVDTGITDHPDLLANRTSPLGYDFI) form the Peptidase S8 domain.

This sequence belongs to the peptidase S8 family. In terms of assembly, heterodimer of a large and a small chain.

It localises to the secreted. The polypeptide is Protease 2 small chain (Achromobacter lyticus).